A 241-amino-acid chain; its full sequence is Kynurenine formamidase (241 aa).

An HGGXW motif is present at residues His-23–Trp-27. The active-site Nucleophile is the Ser-95. Catalysis depends on residues Asp-191 and His-223.

It belongs to the kynurenine formamidase family. As to quaternary structure, homodimer.

The enzyme catalyses N-formyl-L-kynurenine + H2O = L-kynurenine + formate + H(+). The protein operates within amino-acid degradation; L-tryptophan degradation via kynurenine pathway; L-kynurenine from L-tryptophan: step 2/2. Its function is as follows. Catalyzes the hydrolysis of N-formyl-L-kynurenine to L-kynurenine, the second step in the kynurenine pathway of tryptophan degradation. Kynurenine may be further oxidized to nicotinic acid, NAD(H) and NADP(H). Required for elimination of toxic metabolites. This is Kynurenine formamidase from Eremothecium gossypii (strain ATCC 10895 / CBS 109.51 / FGSC 9923 / NRRL Y-1056) (Yeast).